The sequence spans 155 residues: MNENISKVVIYTDGACAGNPGPGGWGALLQFNDTSKEILGYELDTTNNRMEITAALEALRILKKSCNVEIYTDSKYLQQGITTWIHNWVKNNWCKSNNEAVKNADLWQKLYAELSKHTIIWKWVKGHANNSGNIAADKLAAQGRQTAIEILKCRV.

Positions 4–145 constitute an RNase H type-1 domain; the sequence is NISKVVIYTD…ADKLAAQGRQ (142 aa). Positions 13, 51, 73, and 137 each coordinate Mg(2+).

The protein belongs to the RNase H family. Monomer. Mg(2+) serves as cofactor.

It is found in the cytoplasm. The catalysed reaction is Endonucleolytic cleavage to 5'-phosphomonoester.. Functionally, endonuclease that specifically degrades the RNA of RNA-DNA hybrids. The sequence is that of Ribonuclease H from Rickettsia canadensis (strain McKiel).